Consider the following 480-residue polypeptide: Pyruvate kinase II (480 aa).

Position 36 (Arg-36) interacts with substrate. Positions 38, 40, and 70 each coordinate K(+). 38–41 contributes to the ATP binding site; it reads NFSH. Residues Arg-77 and Lys-160 each contribute to the ATP site. Residue Lys-223 participates in substrate binding. Glu-225 contributes to the Mg(2+) binding site. The substrate site is built by Gly-251, Asp-252, and Thr-284. Asp-252 contributes to the Mg(2+) binding site.

It belongs to the pyruvate kinase family. In terms of assembly, homotetramer. Requires Mg(2+) as cofactor. K(+) serves as cofactor.

The catalysed reaction is pyruvate + ATP = phosphoenolpyruvate + ADP + H(+). The protein operates within carbohydrate degradation; glycolysis; pyruvate from D-glyceraldehyde 3-phosphate: step 5/5. With respect to regulation, allosterically activated by AMP and by several sugar phosphates. Belongs to type II PK. Functionally, catalyzes the formation of pyruvate in the last step of glycolysis, it is irreversible under physiological conditions. The reaction is critical for the control of metabolic flux in the second part of glycolysis. In Salmonella typhimurium (strain LT2 / SGSC1412 / ATCC 700720), this protein is Pyruvate kinase II (pykA).